We begin with the raw amino-acid sequence, 447 residues long: N-succinylarginine dihydrolase (447 aa).

Substrate is bound by residues 19 to 28 (AGLSFGNEAS), N110, and 137 to 138 (HR). E174 is an active-site residue. R212 serves as a coordination point for substrate. Residue H248 is part of the active site. Positions 250 and 359 each coordinate substrate. C365 (nucleophile) is an active-site residue.

Belongs to the succinylarginine dihydrolase family. In terms of assembly, homodimer.

The catalysed reaction is N(2)-succinyl-L-arginine + 2 H2O + 2 H(+) = N(2)-succinyl-L-ornithine + 2 NH4(+) + CO2. Its pathway is amino-acid degradation; L-arginine degradation via AST pathway; L-glutamate and succinate from L-arginine: step 2/5. Catalyzes the hydrolysis of N(2)-succinylarginine into N(2)-succinylornithine, ammonia and CO(2). The protein is N-succinylarginine dihydrolase of Escherichia coli O8 (strain IAI1).